The primary structure comprises 1396 residues: MVDITDFFKKTNKADSSQAFNQVRINIASPEQIRSWSYGEVTKPETINYRTFKPEKDGLFCAKIFGPVKDYECLCGKYKRMKYRGIVCEKCGVEVTTSKVRRERMGHIELASPIAHIWFVRSLPSRISILLDMNLKDLERVIYFEAYIVMDPGLSPLHKGDLLTEEMLQQAQNEYGEDNFIVGIGAEAIRTLLAELDLKSLRNALQEEVNNVINSDFKRKKILRRLKLIEDFIGSGNKPEWMIVTVLPIIPPELRPLVMLDAGRFASSDLNELYRRLINRNNRLKYLKKEEDGVPGIVLRNEQRMVQLSADTLFDNGKRGKAVKNSNKRPFKSLSDMLKGKQGRFRQNLLGKRVDYSGRSVIVVGPELKLHQCGLPKQMALELFKPFVYAELERCGIATTIKAAKRIVELGTPDVWNALAKVIKHHPVLLNRAPTLHCLSIQAFEPVLIEDKAIQLHPLVCTAFNADFDGDQMAVHVPLSTEAQLEARVLMMSTNNILSPANGRPIIVPDKDIVLGLYYLTLSIDGEIGEGRLFGSMAEIHHALFNKVVSLHSKIKFRKHIINADGDKVMALVNTTPGRLMLGELLPDGDNISFDVVNKVMTKKGISAIVDMVYRYYGQKATVVFADKLMKLGFKYACISGISFGMDDMIVPETKSKHVNDTLLEVQEFERQYSEGLITSGEKYNKVIDAWSRYTDRVANDMMKGIAAGDQTSVGLTNQERLNSIFMMADSEARSSVTQIKQLIGSKGLIAKASGEIIDRPILSNFCEGLTVFECFIGIPGTRKGLADTAVKTKVSGHLSRKLSESAHGYFVKREDCGTTNGLIITAVVEGGVIVVTLAEQVLGRVAVSNVYCPITKVLILQQGEMIDEYKVELINTAGINSIKVRSVLTCELQEGVCAKCYGRDLSTGKLVAIGTAVGIVAAQSIGEPGTQLTMRTFHIGGAATRGVEASSFEAIVDGRVKIINPNFVVNSNNKSVIMSRSCEVILADNVGQEITRYKAQYGSILLVTDGQEVTKGTSLVAWDPYAMPIVTEKSGYVMFKDMIDGVSVKDIIDESTGIVNRVIIEPKQGRGEVVLRPRICLLDQNKQPLTLSNGLEAEYFLPVNSILSVEEGANVSAGDILARIPREFAGTKDITGGLPRVIELFEARKPKNHAVIAEIDGCVKFGKDYKSKRRLILQPNDECQEPIEYILPKGRHVTVNEGDVVKKGDMLIEGSPVLQDILKVMGVEALGLYIINEIQAVYRLQGVKIDNKHIEVIITRMLQKVEITDSGDSNFVIEEKVNKREVINTNKKLKVKGLREAQYRPILQGITKASLQTQSFISAASFQETTRVLTEAAIAGKVDKLEGLKENVIVGQTIPAGTGFYINEIKKIARQRDKEIIAAKDAELQENNTEA.

Residues Cys-73, Cys-75, Cys-88, and Cys-91 each contribute to the Zn(2+) site. The Mg(2+) site is built by Asp-467, Asp-469, and Asp-471. Cys-817, Cys-891, Cys-898, and Cys-901 together coordinate Zn(2+).

Belongs to the RNA polymerase beta' chain family. In terms of assembly, the RNAP catalytic core consists of 2 alpha, 1 beta, 1 beta' and 1 omega subunit. When a sigma factor is associated with the core the holoenzyme is formed, which can initiate transcription. Mg(2+) is required as a cofactor. Zn(2+) serves as cofactor.

It catalyses the reaction RNA(n) + a ribonucleoside 5'-triphosphate = RNA(n+1) + diphosphate. Functionally, DNA-dependent RNA polymerase catalyzes the transcription of DNA into RNA using the four ribonucleoside triphosphates as substrates. This Orientia tsutsugamushi (strain Boryong) (Rickettsia tsutsugamushi) protein is DNA-directed RNA polymerase subunit beta'.